A 208-amino-acid polypeptide reads, in one-letter code: Transmembrane protein 160 (208 aa).

A mitochondrion-targeting transit peptide spans 1 to 45 (MASIRWLMGSRLSRFVCPFAQLVRQPVLRYVRPPVRALHRGSVRR). Transmembrane regions (helical) follow at residues 82–102 (GFLSWFRNGLLATGIGVIAFV), 110–130 (AGYAFFILGGMCVSFGGASYV), and 147–167 (VLLHTAVVSSAALFWLCAVSL). The span at 181–192 (DDEEHGADESSE) shows a compositional bias: acidic residues. The disordered stretch occupies residues 181 to 208 (DDEEHGADESSECAECRARRDREKGQDK). Positions 194–208 (AECRARRDREKGQDK) are enriched in basic and acidic residues.

Belongs to the TMEM160 family.

The protein resides in the mitochondrion inner membrane. This is Transmembrane protein 160 from Danio rerio (Zebrafish).